Here is an 89-residue protein sequence, read N- to C-terminus: Small ribosomal subunit protein uS15 (89 aa).

This sequence belongs to the universal ribosomal protein uS15 family. In terms of assembly, part of the 30S ribosomal subunit. Forms a bridge to the 50S subunit in the 70S ribosome, contacting the 23S rRNA.

One of the primary rRNA binding proteins, it binds directly to 16S rRNA where it helps nucleate assembly of the platform of the 30S subunit by binding and bridging several RNA helices of the 16S rRNA. Its function is as follows. Forms an intersubunit bridge (bridge B4) with the 23S rRNA of the 50S subunit in the ribosome. In Bacillus licheniformis (strain ATCC 14580 / DSM 13 / JCM 2505 / CCUG 7422 / NBRC 12200 / NCIMB 9375 / NCTC 10341 / NRRL NRS-1264 / Gibson 46), this protein is Small ribosomal subunit protein uS15.